Reading from the N-terminus, the 118-residue chain is Large ribosomal subunit protein bL20 (118 aa).

It belongs to the bacterial ribosomal protein bL20 family.

In terms of biological role, binds directly to 23S ribosomal RNA and is necessary for the in vitro assembly process of the 50S ribosomal subunit. It is not involved in the protein synthesizing functions of that subunit. The chain is Large ribosomal subunit protein bL20 from Campylobacter concisus (strain 13826).